Consider the following 170-residue polypeptide: ATP synthase subunit b (170 aa).

The helical transmembrane segment at 22–41 threads the bilayer; sequence ILNWAVVVFGLYKFLPGFLG. The segment at 72-98 is disordered; the sequence is AKKDLSSAEEKASQIKADSLKRSESIR.

This sequence belongs to the ATPase B chain family. F-type ATPases have 2 components, F(1) - the catalytic core - and F(0) - the membrane proton channel. F(1) has five subunits: alpha(3), beta(3), gamma(1), delta(1), epsilon(1). F(0) has four main subunits: a(1), b(1), b'(1) and c(10-14). The alpha and beta chains form an alternating ring which encloses part of the gamma chain. F(1) is attached to F(0) by a central stalk formed by the gamma and epsilon chains, while a peripheral stalk is formed by the delta, b and b' chains.

It is found in the cellular thylakoid membrane. In terms of biological role, f(1)F(0) ATP synthase produces ATP from ADP in the presence of a proton or sodium gradient. F-type ATPases consist of two structural domains, F(1) containing the extramembraneous catalytic core and F(0) containing the membrane proton channel, linked together by a central stalk and a peripheral stalk. During catalysis, ATP synthesis in the catalytic domain of F(1) is coupled via a rotary mechanism of the central stalk subunits to proton translocation. Functionally, component of the F(0) channel, it forms part of the peripheral stalk, linking F(1) to F(0). This chain is ATP synthase subunit b, found in Prochlorococcus marinus (strain MIT 9301).